The sequence spans 140 residues: MANERTFSILKPDATRRNITGAVNAVIEAAGLRIVGQRRIRMTRAQAEKFYEVHKERPFFGELVEFMTSGPVVVQVLEGENAVAKYREVMGATNPAQAADGTIRKQFAESVGENTVHGSDSADNAKIEIAQFFTDADIAA.

Residues K11, F59, R87, T93, R104, and N114 each coordinate ATP. Residue H117 is the Pros-phosphohistidine intermediate of the active site.

The protein belongs to the NDK family. Homotetramer. Mg(2+) is required as a cofactor.

The protein resides in the cytoplasm. The catalysed reaction is a 2'-deoxyribonucleoside 5'-diphosphate + ATP = a 2'-deoxyribonucleoside 5'-triphosphate + ADP. The enzyme catalyses a ribonucleoside 5'-diphosphate + ATP = a ribonucleoside 5'-triphosphate + ADP. Major role in the synthesis of nucleoside triphosphates other than ATP. The ATP gamma phosphate is transferred to the NDP beta phosphate via a ping-pong mechanism, using a phosphorylated active-site intermediate. This Methylorubrum populi (strain ATCC BAA-705 / NCIMB 13946 / BJ001) (Methylobacterium populi) protein is Nucleoside diphosphate kinase.